The primary structure comprises 115 residues: uncharacterized protein (115 aa).

A disordered region spans residues 1–86; it reads RRPARSGGDG…LSSQLVRPSR (86 aa).

This is an uncharacterized protein from Homo sapiens (Human).